We begin with the raw amino-acid sequence, 367 residues long: Glutamate 5-kinase (367 aa).

K9 contacts ATP. Substrate contacts are provided by S49, D136, and N148. Residues 168–169 (TD) and 210–216 (TGGMKSK) each bind ATP. The region spanning 276–350 (SGQIEVDAGA…GMQSQDIQVR (75 aa)) is the PUA domain.

The protein belongs to the glutamate 5-kinase family.

It is found in the cytoplasm. It carries out the reaction L-glutamate + ATP = L-glutamyl 5-phosphate + ADP. It functions in the pathway amino-acid biosynthesis; L-proline biosynthesis; L-glutamate 5-semialdehyde from L-glutamate: step 1/2. Catalyzes the transfer of a phosphate group to glutamate to form L-glutamate 5-phosphate. The polypeptide is Glutamate 5-kinase (Bacillus cereus (strain B4264)).